Here is a 43-residue protein sequence, read N- to C-terminus: Protein PsbN (43 aa).

The chain crosses the membrane as a helical span at residues 7–27; that stretch reads LSIGIAVVVIAVTGFSIYTAF.

The protein belongs to the PsbN family.

It localises to the cellular thylakoid membrane. Functionally, may play a role in photosystem I and II biogenesis. This Picosynechococcus sp. (strain ATCC 27264 / PCC 7002 / PR-6) (Agmenellum quadruplicatum) protein is Protein PsbN.